Here is a 243-residue protein sequence, read N- to C-terminus: Derlin-1.1 (243 aa).

The Cytoplasmic segment spans residues 1–20 (MSSPAEYYKSLPPISKAYGT). The chain crosses the membrane as a helical span at residues 21-41 (LCFFTTVLVQLQILHPLFLYL). Residues 42-55 (DYPLVFKKFEIWRL) are Lumenal-facing. The helical transmembrane segment at 56–76 (LTSFFFLAPFSMKFGIRLLMI) threads the bilayer. The Cytoplasmic segment spans residues 77–94 (ARYGVMLEKGAFDKRTAD). Residues 95-115 (FLWMMIFGAISLLVLSIIPLF) traverse the membrane as a helical segment. Topologically, residues 116–157 (NSFFLGIPMVSMLLYVWSRENPNAQINIYGLVQLRSFYLPWA) are lumenal. Residues 158–178 (MLLLDVIFGSSLMPGLLGIMV) form a helical membrane-spanning segment. Residues 179–243 (GHLYYFFAVL…FRGRSYRLNQ (65 aa)) are Cytoplasmic-facing. A disordered region spans residues 219 to 243 (SPVRPPANGNSGSGVFRGRSYRLNQ).

This sequence belongs to the derlin family. In terms of tissue distribution, expressed in roots, stalks, leaves, immature ears, embryo and endosperm.

The protein localises to the endoplasmic reticulum membrane. Its function is as follows. May be involved in the degradation process of specific misfolded endoplasmic reticulum (ER) luminal proteins. The protein is Derlin-1.1 (DER1.1) of Zea mays (Maize).